A 538-amino-acid chain; its full sequence is Potassium channel subfamily K member 10 (538 aa).

At 1-71 (MFFLYTDFFL…GLQTVMKWKT (71 aa)) the chain is on the cytoplasmic side. The helical transmembrane segment at 72-92 (VVAIFVVVVVYLVTGGLVFRA) threads the bilayer. Asn-144, Asn-147, and Asn-148 each carry an N-linked (GlcNAc...) asparagine glycan. The segment at residues 154–180 (LGSAFFFAGTVITTIGYGNIAPSTEGG) is an intramembrane region (pore-forming). Residues Thr-167, Ile-168, Gly-169, and Tyr-170 each coordinate K(+). The selectivity filter 1 stretch occupies residues 167–172 (TIGYGN). The chain crosses the membrane as a helical span at residues 182 to 202 (IFCILYAIFGIPLFGFLLAGI). At 203-233 (GDQLGTIFGKSIARVEKVFRKKQVSQTKIRV) the chain is on the cytoplasmic side. The chain crosses the membrane as a helical span at residues 234–254 (ISTILFILAGCIVFVTIPAVI). Residues 263–294 (ALESIYFVVVTLTTVGFGDFVAGGNAGINYRE) constitute an intramembrane region (pore-forming). K(+)-binding residues include Thr-276, Val-277, Gly-278, and Phe-279. The segment at 276–281 (TVGFGD) is selectivity filter 2. The chain crosses the membrane as a helical span at residues 299–319 (LVWFWILVGLAYFAAVLSMIG). The Cytoplasmic portion of the chain corresponds to 320-538 (DWLRVLSKKT…ENNSLLEDRN (219 aa)). Residues 412–421 (SQESINNRPN) show a composition bias toward polar residues. Disordered stretches follow at residues 412–443 (SQESINNRPNNLRLKGPEQLNKHGQGASEDNI) and 510–538 (QHAELENGMIPTDTKDREPENNSLLEDRN). The segment covering 522–538 (DTKDREPENNSLLEDRN) has biased composition (basic and acidic residues).

It belongs to the two pore domain potassium channel (TC 1.A.1.8) family. In terms of assembly, homodimer; disulfide-linked. Forms heterodimers with other 2-pore domain K(+) channel subunits, such as KCNK2, KCNK4 and KCNK18. Abundantly expressed in pancreas and kidney and to a lower level in brain, testis, colon, and small intestine. In brain, mainly expressed in cerebellum, occipital lobe, putamen, and thalamus. No expression is detected in amygdala and spinal cord. As to expression, strongly expressed in kidney (primarily in the proximal tubule) and pancreas. In terms of tissue distribution, abundantly expressed in brain.

The protein resides in the cell membrane. The enzyme catalyses K(+)(in) = K(+)(out). The catalysed reaction is Rb(+)(in) = Rb(+)(out). It carries out the reaction Cs(+)(in) = Cs(+)(out). Activated by various stimuli including acidic pH, anesthetics chloroform, halothane and isoflurane, mechanical stretch, lipids such as arachidonic, docosahexaenoic and linoleic polyunsaturated fatty acids and lysophosphatidylcholine and lysophosphatidylinositol lysophospholipids. Inhibited by norfluoxetine, the active metabolite of antidepressant fluoxetine (Prozac). Its function is as follows. K(+) channel that conducts voltage-dependent outward rectifying currents upon membrane depolarization. Voltage sensing is coupled to K(+) electrochemical gradient in an 'ion flux gating' mode where outward but not inward ion flow opens the gate. Converts to voltage-independent 'leak' conductance mode upon stimulation by various stimuli including mechanical membrane stretch, acidic pH, heat and lipids. Homo- and heterodimerizes to form functional channels with distinct regulatory and gating properties. In trigeminal ganglia sensory neurons, the heterodimer of KCNK10/TREK-2 and KCNK18/TRESK inhibits neuronal firing and neurogenic inflammation by stabilizing the resting membrane potential at K(+) equilibrium potential as well as by regulating the threshold of action potentials and the spike frequency. Permeable to other monovalent ions such as Rb(+) and Cs(+). The sequence is that of Potassium channel subfamily K member 10 from Homo sapiens (Human).